We begin with the raw amino-acid sequence, 332 residues long: RING-H2 finger protein ATL81 (332 aa).

An N-terminal signal peptide occupies residues 1 to 19 (MYDLTFLLISLFPIDITLP). A helical membrane pass occupies residues 76–96 (IVLTGSLLFIIFTGFFSFFFC). The RING-type; atypical zinc-finger motif lies at 154–196 (CSICLTEFMDDDTIRLISTCNHSFHTICIDLWFEGHKTCPVCR).

Belongs to the RING-type zinc finger family. ATL subfamily.

It localises to the membrane. The catalysed reaction is S-ubiquitinyl-[E2 ubiquitin-conjugating enzyme]-L-cysteine + [acceptor protein]-L-lysine = [E2 ubiquitin-conjugating enzyme]-L-cysteine + N(6)-ubiquitinyl-[acceptor protein]-L-lysine.. The protein operates within protein modification; protein ubiquitination. The polypeptide is RING-H2 finger protein ATL81 (ATL81) (Arabidopsis thaliana (Mouse-ear cress)).